Here is a 391-residue protein sequence, read N- to C-terminus: Mannose-6-phosphate isomerase (391 aa).

Gln97, His99, Glu134, and His255 together coordinate Zn(2+). Arg274 is an active-site residue. Lys280 is modified (N6-acetyllysine).

Belongs to the mannose-6-phosphate isomerase type 1 family. The cofactor is Zn(2+).

It localises to the cytoplasm. It carries out the reaction D-mannose 6-phosphate = D-fructose 6-phosphate. Functionally, involved in the conversion of glucose to GDP-L-fucose, which can be converted to L-fucose, a capsular polysaccharide. This is Mannose-6-phosphate isomerase (manA) from Shigella flexneri.